The chain runs to 500 residues: FAD-linked oxidoreductase easE (500 aa).

The FAD-binding PCMH-type domain occupies 37–220; that stretch reads QGRIPLFTVG…TRATMRVFPD (184 aa).

It belongs to the oxygen-dependent FAD-linked oxidoreductase family. Requires FAD as cofactor.

It functions in the pathway alkaloid biosynthesis; ergot alkaloid biosynthesis. In terms of biological role, FAD-linked oxidoreductase; part of the gene cluster that mediates the biosynthesis of fungal ergot alkaloid. DmaW catalyzes the first step of ergot alkaloid biosynthesis by condensing dimethylallyl diphosphate (DMAP) and tryptophan to form 4-dimethylallyl-L-tryptophan. The second step is catalyzed by the methyltransferase easF that methylates 4-dimethylallyl-L-tryptophan in the presence of S-adenosyl-L-methionine, resulting in the formation of 4-dimethylallyl-L-abrine. The catalase easC and the FAD-dependent oxidoreductase easE then transform 4-dimethylallyl-L-abrine to chanoclavine-I which is further oxidized by easD in the presence of NAD(+), resulting in the formation of chanoclavine-I aldehyde. Chanoclavine-I aldehyde is the precursor of ergoamides and ergopeptines in Clavicipitaceae, and clavine-type alcaloids such as fumiclavine in Trichocomaceae. However, the metabolites downstream of chanoclavine-I aldehyde in Arthrodermataceae have not been identified yet. In Arthroderma benhamiae (strain ATCC MYA-4681 / CBS 112371) (Trichophyton mentagrophytes), this protein is FAD-linked oxidoreductase easE.